The sequence spans 1247 residues: Leucine-rich repeat-containing protein 53 (1247 aa).

7 LRR repeats span residues 34-55, 58-79, 82-102, 108-129, 132-153, 158-179, and 182-203; these read TTRVLIITDGYLSSIESTNLSL, NLALLSLSRNGIEDVQEDALHG, MLRTLLLEHNQISSSSLTDHT, SLQVLVLSNNALRTLRGSWFRN, GLTRLQLDGNQITNLTDSSFGG, SLRYLDLSNNFISYIGKDAFRP, and QLQEVDLSRNRLAHMPDVFTPL. Positions 214–271 constitute an LRRCT domain; the sequence is NQWSCTCDLHPLARFLRNYIKSSAHTLRNAKDLNCQPSTAAVAAAQSVLRLSETNCDS. A helical membrane pass occupies residues 294–314; sequence LLTVLGFAGAVGLTCLGLVVF. Disordered regions lie at residues 828 to 866, 887 to 927, and 1223 to 1247; these read SAGHIPDGNTSKLPQPTPTDAEHRHSHSQFSTEQMEDAT, VLPF…SPRN, and ENSAPKPVLYPPSAEYATTSPLETE. Composition is skewed to polar residues over residues 898 to 927 and 1238 to 1247; these read DQGTTESTEHMGQNVSKTSELNQFSLSPRN and YATTSPLETE.

It localises to the membrane. The polypeptide is Leucine-rich repeat-containing protein 53 (LRRC53) (Homo sapiens (Human)).